A 1237-amino-acid polypeptide reads, in one-letter code: Zinc finger protein ZFAT (1237 aa).

The C2H2-type 1 zinc-finger motif lies at 12–35; it reads FMCKCCNLFSPNQSELVTHVSEKH. The interval 50 to 110 is disordered; sequence RPLNTPENPN…GPLATEEGSR (61 aa). The segment covering 70–81 has biased composition (basic residues); it reads MKRKRGRPKGST. The C2H2-type 2; degenerate zinc finger occupies 116–141; it reads LECSKCCRKFSNTRQLRKHICIIVLN. Residues 147–188 form a disordered region; that stretch reads GDAGNESDLDLEKTYKEDDREKASKRPRAQKTEKVQKISGKE. The segment covering 156 to 186 has biased composition (basic and acidic residues); sequence DLEKTYKEDDREKASKRPRAQKTEKVQKISG. 7 C2H2-type zinc fingers span residues 271 to 293, 299 to 321, 326 to 349, 354 to 377, 404 to 426, 432 to 454, and 458 to 481; these read FTCE…LRIH, YKCS…LRKH, FACD…ERVH, QHCR…RDMH, YDCH…MLVH, FACE…VRKH, and YVCA…REVH. Zn(2+) contacts are provided by cysteine 273, cysteine 276, histidine 289, histidine 293, cysteine 301, cysteine 304, histidine 317, histidine 321, cysteine 328, cysteine 331, histidine 344, histidine 349, cysteine 356, cysteine 359, histidine 372, histidine 377, cysteine 406, cysteine 409, histidine 422, and histidine 426. Cysteine 460, cysteine 463, histidine 476, and histidine 481 together coordinate Zn(2+). 2 disordered regions span residues 551–576 and 601–671; these read VPGD…LSPC and SDTS…CLRA. Residues 565 to 574 show a composition bias toward polar residues; that stretch reads TPQSESSSLS. A compositionally biased stretch (low complexity) spans 601-617; that stretch reads SDTSSAEPPAAAEATSD. C2H2-type zinc fingers lie at residues 737 to 759, 765 to 788, 793 to 817, and 825 to 848; these read LECE…VRTH, YYCS…IQKH, LKCP…LKVH, and YSCP…KTNH. Residues cysteine 767, cysteine 770, histidine 783, histidine 788, cysteine 795, cysteine 800, histidine 813, histidine 817, cysteine 827, cysteine 830, histidine 843, histidine 848, cysteine 877, cysteine 880, histidine 894, histidine 898, cysteine 906, cysteine 909, histidine 922, histidine 926, cysteine 934, cysteine 937, histidine 950, and leucine 953 each contribute to the Zn(2+) site. A C2H2-type 14; degenerate zinc finger spans residues 875-898; sequence MKCPYCDFYFMKNGSDLQRHIWAH. C2H2-type zinc fingers lie at residues 904-926, 932-954, 961-983, 989-1012, and 1036-1059; these read FKCS…MNRH, HLCD…KLLH, FKCT…MEQH, FRCA…NRKH, and LKCP…KNKH.

Detected in spleen and thymus but not in liver, muscle, heart, kidney, brain, bone marrow or pancreas. Expressed in CD19+, CD4+ and CD8+ lymphocytes but not in CD11b+ lymphocytes or peritoneal macrophages (at protein level).

Its subcellular location is the nucleus. It is found in the cytoplasm. It localises to the cytosol. In terms of biological role, may be involved in transcriptional regulation. Overexpression causes down-regulation of a number of genes involved in the immune response. Some genes are also up-regulated. The sequence is that of Zinc finger protein ZFAT (Zfat) from Mus musculus (Mouse).